The chain runs to 198 residues: Elongation factor Ts (198 aa).

Residues 81 to 84 are involved in Mg(2+) ion dislocation from EF-Tu; the sequence is TDFV.

It belongs to the EF-Ts family.

The protein localises to the cytoplasm. In terms of biological role, associates with the EF-Tu.GDP complex and induces the exchange of GDP to GTP. It remains bound to the aminoacyl-tRNA.EF-Tu.GTP complex up to the GTP hydrolysis stage on the ribosome. The polypeptide is Elongation factor Ts (Dictyoglomus thermophilum (strain ATCC 35947 / DSM 3960 / H-6-12)).